The following is a 473-amino-acid chain: Ribulose bisphosphate carboxylase large chain 3 (473 aa).

Substrate is bound by residues Asn-116 and Thr-166. The active-site Proton acceptor is the Lys-168. Position 170 (Lys-170) interacts with substrate. The Mg(2+) site is built by Lys-194, Asp-196, and Glu-197. Lys-194 carries the N6-carboxylysine modification. His-287 acts as the Proton acceptor in catalysis. Substrate is bound by residues Arg-288, His-320, and Ser-372.

It belongs to the RuBisCO large chain family. Type I subfamily. As to quaternary structure, heterohexadecamer of 8 large chains and 8 small chains. It depends on Mg(2+) as a cofactor.

The catalysed reaction is 2 (2R)-3-phosphoglycerate + 2 H(+) = D-ribulose 1,5-bisphosphate + CO2 + H2O. The enzyme catalyses D-ribulose 1,5-bisphosphate + O2 = 2-phosphoglycolate + (2R)-3-phosphoglycerate + 2 H(+). Its function is as follows. RuBisCO catalyzes two reactions: the carboxylation of D-ribulose 1,5-bisphosphate, the primary event in carbon dioxide fixation, as well as the oxidative fragmentation of the pentose substrate. Both reactions occur simultaneously and in competition at the same active site. In Nitrobacter hamburgensis (strain DSM 10229 / NCIMB 13809 / X14), this protein is Ribulose bisphosphate carboxylase large chain 3.